The following is a 769-amino-acid chain: MSNNLRRVFLKPAEENSGNASRCVSGCMYQVVQTIGSDGKNLLQLLPIPKSSGNLIPLVQSSVMSDALKGNTGKPVQVTFQTQISSSSTSASVQLPIFQPASSSNYFLTRTVDTSEKGRVTSVGTGNFSSSVSKVQSHGVKIDGLTMQTFAVPPSTQKDSSFIVVNTQSLPVTVKSPVLPSGHHLQIPAHAEVKSVPASSLPPSVQQKILATATTSTSGMVEASQMPTVIYVSPVNTVKNVVTKNFQNIYPKPVTEIAKPVILNTTQIPKNVATETQLKGGQHSQAAPVKWIFQDNLQPFTPSLVPVKSSNNVASKILKTFVDRKNLGDNTINMPPLSTIDPSGTRSKNMPIKDNALVMFNGKVYLLAKKGTDVLPSQIDQQNSVSPDTPVRKDTLQTVSSSPVTEISREVVNIVLAKSKSSQMETKSLSNTQLASMANLRAEKNKVEKPSPSTTNPHMNQSSNYLKQSKTLFTNPIFPVGFSTGHNAPRKVTAVIYARKGSVLQSIEKISSSVDATTVTSQQCVFRDQEPKIHNEMASTSDKGAQGRNDKKDSQGRSNKALHLKSDAEFKKIFGLTKDLRVCLTRIPDHLTSGEGFDSFSSLVKSGTYKETEFMVKEGERKQQNFDKKRKAKTNKKMDHIKKRKTENAYNAIINGEANVTGSQLLSSILPTSDVSQHNILTSHSKTRQEKRTEMEYYTHEKQEKGTLNSNAAYEQSHFFNKNYTEDIFPVTPPELEETIRDEKIRRLKQVLREKEAALEEMRKKMHQK.

Residues K259 and K279 each participate in a glycyl lysine isopeptide (Lys-Gly) (interchain with G-Cter in SUMO2) cross-link. Residues 378–387 (QIDQQNSVSP) show a composition bias toward polar residues. The interval 378–400 (QIDQQNSVSPDTPVRKDTLQTVS) is disordered. A phosphoserine mark is found at S402, S430, and S436. A Glycyl lysine isopeptide (Lys-Gly) (interchain with G-Cter in SUMO2) cross-link involves residue K446. S502 is subject to Phosphoserine. Positions 528-562 (DQEPKIHNEMASTSDKGAQGRNDKKDSQGRSNKAL) are disordered. Positions 580-584 (LRVCL) match the PxVxL motif motif. Position 599 is a phosphoserine (S599). Residue K605 forms a Glycyl lysine isopeptide (Lys-Gly) (interchain with G-Cter in SUMO2) linkage. 2 short sequence motifs (nuclear localization signal) span residues 628–631 (KKRK) and 642–645 (KKRK). K702 is covalently cross-linked (Glycyl lysine isopeptide (Lys-Gly) (interchain with G-Cter in SUMO2)). T732 is modified (phosphothreonine). Residues 740–769 (IRDEKIRRLKQVLREKEAALEEMRKKMHQK) are a coiled coil.

This sequence belongs to the LRIF1 family. Interacts with RARA. Interacts with SMCHD1; leading to recruitment to inactivated chromosome X in females. Interacts (via PxVxL motif) with HP1 (CBX1/HP1-beta, CBX3/HP1-gamma and CBX5/HP1-alpha). Widely expressed, with the highest expression levels in heart, liver and placenta.

Its subcellular location is the chromosome. It localises to the nucleus matrix. In terms of biological role, together with SMCHD1, involved in chromosome X inactivation in females by promoting the compaction of heterochromatin. Also able to repress the ligand-induced transcriptional activity of retinoic acid receptor alpha (RARA), possibly through direct recruitment of histone deacetylases. Also required for silencing of the DUX4 locus in somatic cells. The sequence is that of Ligand-dependent nuclear receptor-interacting factor 1 from Homo sapiens (Human).